Consider the following 353-residue polypeptide: Phospho-N-acetylmuramoyl-pentapeptide-transferase (353 aa).

Helical transmembrane passes span 24–44 (LGFFIAFFLTLFLMPKFILWA), 66–86 (TPTMGGIVFVFATIVASVLCA), 88–108 (LGNLYVLLGIIVLVGFSFVGF), 129–149 (FGMLFVLSLVVSVLLSLKGLD), 160–180 (PLFEMPTMLAVGFWVLVFLST), 192–212 (GLASVPSIFTLLSLSIFVYVA), 229–249 (VGELFVVSLALVGSLFGFLWY), 256–276 (VFMGDSGSLALGGFIAYNAIV), 281–301 (ILLVLMGSIFVVETLSVILQV), and 330–350 (KVIVRFWIISMLSNLVALLSL).

The protein belongs to the glycosyltransferase 4 family. MraY subfamily. Mg(2+) serves as cofactor.

It localises to the cell inner membrane. The catalysed reaction is UDP-N-acetyl-alpha-D-muramoyl-L-alanyl-gamma-D-glutamyl-meso-2,6-diaminopimeloyl-D-alanyl-D-alanine + di-trans,octa-cis-undecaprenyl phosphate = di-trans,octa-cis-undecaprenyl diphospho-N-acetyl-alpha-D-muramoyl-L-alanyl-D-glutamyl-meso-2,6-diaminopimeloyl-D-alanyl-D-alanine + UMP. The protein operates within cell wall biogenesis; peptidoglycan biosynthesis. In terms of biological role, catalyzes the initial step of the lipid cycle reactions in the biosynthesis of the cell wall peptidoglycan: transfers peptidoglycan precursor phospho-MurNAc-pentapeptide from UDP-MurNAc-pentapeptide onto the lipid carrier undecaprenyl phosphate, yielding undecaprenyl-pyrophosphoryl-MurNAc-pentapeptide, known as lipid I. The polypeptide is Phospho-N-acetylmuramoyl-pentapeptide-transferase (Helicobacter pylori (strain HPAG1)).